The primary structure comprises 483 residues: Cobyric acid synthase (483 aa).

The GATase cobBQ-type domain occupies Ala251–Phe438. Cys333 functions as the Nucleophile in the catalytic mechanism. Residue His430 is part of the active site.

It belongs to the CobB/CobQ family. CobQ subfamily.

It functions in the pathway cofactor biosynthesis; adenosylcobalamin biosynthesis. Its function is as follows. Catalyzes amidations at positions B, D, E, and G on adenosylcobyrinic A,C-diamide. NH(2) groups are provided by glutamine, and one molecule of ATP is hydrogenolyzed for each amidation. This Brucella suis (strain ATCC 23445 / NCTC 10510) protein is Cobyric acid synthase.